The sequence spans 549 residues: Urocanate hydratase (549 aa).

NAD(+) contacts are provided by residues 46-47 (GG), Gln124, 170-172 (GMG), Glu190, Arg195, 236-237 (NA), 257-261 (QTSAH), 267-268 (YV), and Tyr316. Cys404 is a catalytic residue. Gly486 lines the NAD(+) pocket.

It belongs to the urocanase family. It depends on NAD(+) as a cofactor.

The protein resides in the cytoplasm. The catalysed reaction is 4-imidazolone-5-propanoate = trans-urocanate + H2O. It participates in amino-acid degradation; L-histidine degradation into L-glutamate; N-formimidoyl-L-glutamate from L-histidine: step 2/3. Catalyzes the conversion of urocanate to 4-imidazolone-5-propionate. The protein is Urocanate hydratase of Caldanaerobacter subterraneus subsp. tengcongensis (strain DSM 15242 / JCM 11007 / NBRC 100824 / MB4) (Thermoanaerobacter tengcongensis).